A 291-amino-acid polypeptide reads, in one-letter code: 4-diphosphocytidyl-2-C-methyl-D-erythritol kinase (291 aa).

Residue K10 is part of the active site. 94-104 (PVSAGLAGGSS) serves as a coordination point for ATP. D136 is an active-site residue.

Belongs to the GHMP kinase family. IspE subfamily.

The enzyme catalyses 4-CDP-2-C-methyl-D-erythritol + ATP = 4-CDP-2-C-methyl-D-erythritol 2-phosphate + ADP + H(+). It functions in the pathway isoprenoid biosynthesis; isopentenyl diphosphate biosynthesis via DXP pathway; isopentenyl diphosphate from 1-deoxy-D-xylulose 5-phosphate: step 3/6. Functionally, catalyzes the phosphorylation of the position 2 hydroxy group of 4-diphosphocytidyl-2C-methyl-D-erythritol. The protein is 4-diphosphocytidyl-2-C-methyl-D-erythritol kinase of Listeria welshimeri serovar 6b (strain ATCC 35897 / DSM 20650 / CCUG 15529 / CIP 8149 / NCTC 11857 / SLCC 5334 / V8).